Reading from the N-terminus, the 230-residue chain is Cytochrome c oxidase subunit 2 (230 aa).

Residues 1–14 (MAHPTQLGFKDAAM) are Mitochondrial intermembrane-facing. A helical membrane pass occupies residues 15–45 (PVMEELLHFHDHALMIVLLISTLVLYIITAM). The Mitochondrial matrix portion of the chain corresponds to 46–59 (VSTKLTNKYILDSQ). The helical transmembrane segment at 60 to 87 (EIEIVWTILPAVILVLIALPSLRILYLM) threads the bilayer. Residues 88 to 230 (DEINDPHLTI…NWSSLMLEDA (143 aa)) are Mitochondrial intermembrane-facing. Cu cation is bound by residues His-161, Cys-196, Glu-198, Cys-200, His-204, and Met-207. Glu-198 contacts Mg(2+).

Belongs to the cytochrome c oxidase subunit 2 family. In terms of assembly, component of the cytochrome c oxidase (complex IV, CIV), a multisubunit enzyme composed of 14 subunits. The complex is composed of a catalytic core of 3 subunits MT-CO1, MT-CO2 and MT-CO3, encoded in the mitochondrial DNA, and 11 supernumerary subunits COX4I, COX5A, COX5B, COX6A, COX6B, COX6C, COX7A, COX7B, COX7C, COX8 and NDUFA4, which are encoded in the nuclear genome. The complex exists as a monomer or a dimer and forms supercomplexes (SCs) in the inner mitochondrial membrane with NADH-ubiquinone oxidoreductase (complex I, CI) and ubiquinol-cytochrome c oxidoreductase (cytochrome b-c1 complex, complex III, CIII), resulting in different assemblies (supercomplex SCI(1)III(2)IV(1) and megacomplex MCI(2)III(2)IV(2)). Found in a complex with TMEM177, COA6, COX18, COX20, SCO1 and SCO2. Interacts with TMEM177 in a COX20-dependent manner. Interacts with COX20. Interacts with COX16. Cu cation is required as a cofactor.

It localises to the mitochondrion inner membrane. It catalyses the reaction 4 Fe(II)-[cytochrome c] + O2 + 8 H(+)(in) = 4 Fe(III)-[cytochrome c] + 2 H2O + 4 H(+)(out). Functionally, component of the cytochrome c oxidase, the last enzyme in the mitochondrial electron transport chain which drives oxidative phosphorylation. The respiratory chain contains 3 multisubunit complexes succinate dehydrogenase (complex II, CII), ubiquinol-cytochrome c oxidoreductase (cytochrome b-c1 complex, complex III, CIII) and cytochrome c oxidase (complex IV, CIV), that cooperate to transfer electrons derived from NADH and succinate to molecular oxygen, creating an electrochemical gradient over the inner membrane that drives transmembrane transport and the ATP synthase. Cytochrome c oxidase is the component of the respiratory chain that catalyzes the reduction of oxygen to water. Electrons originating from reduced cytochrome c in the intermembrane space (IMS) are transferred via the dinuclear copper A center (CU(A)) of subunit 2 and heme A of subunit 1 to the active site in subunit 1, a binuclear center (BNC) formed by heme A3 and copper B (CU(B)). The BNC reduces molecular oxygen to 2 water molecules using 4 electrons from cytochrome c in the IMS and 4 protons from the mitochondrial matrix. The protein is Cytochrome c oxidase subunit 2 (mt-co2) of Cyprinus carpio (Common carp).